Consider the following 261-residue polypeptide: Aminoglycoside N(3)-acetyltransferase IV (261 aa).

Belongs to the antibiotic N-acetyltransferase family.

The catalysed reaction is a 2-deoxystreptamine antibiotic + acetyl-CoA = an N(3)-acetyl-2-deoxystreptamine antibiotic + CoA + H(+). Resistance to antibiotics containing the 2-deoxy-streptamine ring including gentamicin, kanamycin, tobramycin, neomycin and apramycin. The chain is Aminoglycoside N(3)-acetyltransferase IV (aacC4) from Salmonella sp.